A 355-amino-acid polypeptide reads, in one-letter code: C-C chemokine receptor type 1 (355 aa).

The Extracellular segment spans residues 1–34 (METPDTTENYDMITEFDYGDATPCHKVNERAILA). The helical transmembrane segment at 35–60 (QLLPPLYSLVFVIGVVGNLLVVLVLV) threads the bilayer. Topologically, residues 61 to 64 (QYKR) are cytoplasmic. A helical membrane pass occupies residues 65–91 (LKNMTNIYLLNLAISDLLFLFTLPFLI). Residues 92–107 (YYKSTDDWIFGDAMCK) are Extracellular-facing. Cys106 and Cys183 are oxidised to a cystine. A helical membrane pass occupies residues 108 to 129 (ILSGFYYTGLYSEIFFIILLTI). Residues 130–146 (DRYLAIVHAVFALRART) are Cytoplasmic-facing. A helical transmembrane segment spans residues 147-171 (VTFGVITSIIIWALAILASSPLMYF). Over 172-197 (SKTQWNIVRHSCNLHFPYESFQQWKL) the chain is Extracellular. A helical transmembrane segment spans residues 198 to 223 (FQALKLNLFGLVLPLLVMIVCYTGII). Residues 224–239 (KILLRRPNEKKSKAVR) lie on the Cytoplasmic side of the membrane. Residues 240-264 (LIFVIMIIFFLFWTPYNLTELISVF) form a helical membrane-spanning segment. At 265 to 281 (QEFLFTHLCEQNRQLDL) the chain is on the extracellular side. The chain crosses the membrane as a helical span at residues 282-305 (AMEVTEVIANMHCCVNPVIYAFAG). Residues 306–355 (ERFRKYLRQLFHRRVAVHLVKWLPFLSGDRLERVSSTSPSTGEHELSAGL) are Cytoplasmic-facing.

It belongs to the G-protein coupled receptor 1 family. Interacts with CREB3. Interacts with CCL3. Interacts with CCL15. Interacts with CCL23. Interacts with GNAI1. Interacts with PF4/CXCL4.

It is found in the cell membrane. Chemokine receptor that plays a crucial role in regulating immune cell migration, inflammation, and immune responses. Contributes to the inflammatory response by recruiting immune cells, such as monocytes, macrophages, T-cells, and dendritic cells, to sites of inflammation for the clearance of pathogens and the resolution of tissue damage. When activated by its ligands including CCL3, CCL5-9, CCL13-16 and CCL23, triggers a signaling cascade within immune cells, leading to their migration towards the source of the chemokine. For example, mediates neutrophil migration after activation by CCL3 leading to the sequential release of TNF-alpha and leukotriene B4. Also mediates monocyte migration upon CXCL4 binding. Activation by CCL5 results in neuroinflammation through the ERK1/2 signaling pathway. This chain is C-C chemokine receptor type 1 (CCR1), found in Macaca fascicularis (Crab-eating macaque).